Consider the following 89-residue polypeptide: Small ribosomal subunit protein uS15 (89 aa).

This sequence belongs to the universal ribosomal protein uS15 family. In terms of assembly, part of the 30S ribosomal subunit. Forms a bridge to the 50S subunit in the 70S ribosome, contacting the 23S rRNA.

In terms of biological role, one of the primary rRNA binding proteins, it binds directly to 16S rRNA where it helps nucleate assembly of the platform of the 30S subunit by binding and bridging several RNA helices of the 16S rRNA. Functionally, forms an intersubunit bridge (bridge B4) with the 23S rRNA of the 50S subunit in the ribosome. This is Small ribosomal subunit protein uS15 from Nitratidesulfovibrio vulgaris (strain DSM 19637 / Miyazaki F) (Desulfovibrio vulgaris).